Reading from the N-terminus, the 92-residue chain is Small ribosomal subunit protein uS17 (92 aa).

The protein belongs to the universal ribosomal protein uS17 family. Part of the 30S ribosomal subunit.

In terms of biological role, one of the primary rRNA binding proteins, it binds specifically to the 5'-end of 16S ribosomal RNA. The polypeptide is Small ribosomal subunit protein uS17 (Corynebacterium diphtheriae (strain ATCC 700971 / NCTC 13129 / Biotype gravis)).